The sequence spans 437 residues: Glutamate-1-semialdehyde 2,1-aminomutase (437 aa).

Position 273 is an N6-(pyridoxal phosphate)lysine (lysine 273).

This sequence belongs to the class-III pyridoxal-phosphate-dependent aminotransferase family. HemL subfamily. As to quaternary structure, homodimer. Pyridoxal 5'-phosphate is required as a cofactor.

Its subcellular location is the cytoplasm. The enzyme catalyses (S)-4-amino-5-oxopentanoate = 5-aminolevulinate. It functions in the pathway porphyrin-containing compound metabolism; protoporphyrin-IX biosynthesis; 5-aminolevulinate from L-glutamyl-tRNA(Glu): step 2/2. In Chlamydia caviae (strain ATCC VR-813 / DSM 19441 / 03DC25 / GPIC) (Chlamydophila caviae), this protein is Glutamate-1-semialdehyde 2,1-aminomutase.